A 506-amino-acid chain; its full sequence is Allantoinase (506 aa).

Residues histidine 105, histidine 107, lysine 195, histidine 231, histidine 292, and aspartate 366 each coordinate Zn(2+). Lysine 195 bears the N6-carboxylysine mark.

It belongs to the metallo-dependent hydrolases superfamily. Allantoinase family. In terms of assembly, homotetramer. Zn(2+) serves as cofactor. In terms of processing, carboxylation allows a single lysine to coordinate two zinc ions.

The catalysed reaction is (S)-allantoin + H2O = allantoate + H(+). The protein operates within nitrogen metabolism; (S)-allantoin degradation; allantoate from (S)-allantoin: step 1/1. Catalyzes the conversion of allantoin (5-ureidohydantoin) to allantoate by hydrolytic cleavage of the five-member hydantoin ring. Catalyzes the first step of the ureide allantoin degradation followed by the sequential activity of AAH, UGLYAH and UAH which allows a complete purine breakdown without the intermediate generation of urea. This chain is Allantoinase (ALN), found in Arabidopsis thaliana (Mouse-ear cress).